The following is a 466-amino-acid chain: Ribulose bisphosphate carboxylase large chain (466 aa).

Position 4 is an N6,N6,N6-trimethyllysine (Lys4). Positions 113 and 163 each coordinate substrate. Catalysis depends on Lys165, which acts as the Proton acceptor. Lys167 contacts substrate. The Mg(2+) site is built by Lys191, Asp193, and Glu194. An N6-carboxylysine modification is found at Lys191. The active-site Proton acceptor is the His284. 3 residues coordinate substrate: Arg285, His317, and Ser369.

This sequence belongs to the RuBisCO large chain family. Type I subfamily. Heterohexadecamer of 8 large chains and 8 small chains; disulfide-linked. The disulfide link is formed within the large subunit homodimers. Mg(2+) is required as a cofactor. In terms of processing, the disulfide bond which can form in the large chain dimeric partners within the hexadecamer appears to be associated with oxidative stress and protein turnover.

It is found in the plastid. Its subcellular location is the chloroplast. The enzyme catalyses 2 (2R)-3-phosphoglycerate + 2 H(+) = D-ribulose 1,5-bisphosphate + CO2 + H2O. The catalysed reaction is D-ribulose 1,5-bisphosphate + O2 = 2-phosphoglycolate + (2R)-3-phosphoglycerate + 2 H(+). Its function is as follows. RuBisCO catalyzes two reactions: the carboxylation of D-ribulose 1,5-bisphosphate, the primary event in carbon dioxide fixation, as well as the oxidative fragmentation of the pentose substrate in the photorespiration process. Both reactions occur simultaneously and in competition at the same active site. The chain is Ribulose bisphosphate carboxylase large chain from Drimys winteri (Winter's bark).